Here is a 282-residue protein sequence, read N- to C-terminus: Trihydroxynaphthalene reductase PfmaI (282 aa).

Positions 41, 114, and 147 each coordinate NADP(+). Catalysis depends on proton donor residues serine 164 and tyrosine 178. Residues tyrosine 178, lysine 182, isoleucine 211, and threonine 213 each contribute to the NADP(+) site. Lysine 182 serves as the catalytic Lowers pKa of active site Tyr.

The protein belongs to the short-chain dehydrogenases/reductases (SDR) family.

The protein operates within pigment biosynthesis; melanin biosynthesis. Functionally, trihydroxynaphthalene reductase involved the biosynthesis of dihydroxynaphthalene (DHN)-melanin, a bluish-green pigment forming a dark layer in the conidial wall that protects the conidia from UV radiations. The first step of the pathway is the production of the pentaketide 1,3,6,8-tetrahydroxynaphthalene (1,3,6,8-THN or T4HN) by the polyketide synthase PfmaE though condensation of acetyl-CoA with malonyl-CoA. T4HN is not stable and easily oxidizes into the stable form flaviolin. T4HN is also substrate of the hydroxynaphthalene reductase PfmaG to yield scytalone. The scytalone dehydratase PfmaJ then reduces scytalone to 1,3,8-THN. 1,3,8-THN is then substrate of the hydroxynaphthalene reductase PfmaI to yield vermelone. Vermelone is further converted by the multicopper oxidase PfmaD to 1,8-DHN. Finally the laccase PFICI_06862 transforms 1,8-DHN to DHN-melanin. The roles of the 5-oxoprolinase PfmaA and the proline iminopeptidase PfmaB within the cluster have not been elucidated yet. In Pestalotiopsis fici (strain W106-1 / CGMCC3.15140), this protein is Trihydroxynaphthalene reductase PfmaI.